The primary structure comprises 306 residues: Small ribosomal subunit protein uS2 (306 aa).

The interval 257-306 (EGDKKDETAAAAEVQTSAETEKVADAEKPAEAVAEAEAEAPAADADAEQA) is disordered. Basic and acidic residues predominate over residues 275–286 (ETEKVADAEKPA). Low complexity predominate over residues 287–300 (EAVAEAEAEAPAAD).

This sequence belongs to the universal ribosomal protein uS2 family.

This chain is Small ribosomal subunit protein uS2, found in Streptomyces griseus subsp. griseus (strain JCM 4626 / CBS 651.72 / NBRC 13350 / KCC S-0626 / ISP 5235).